The following is a 61-amino-acid chain: Metallothionein-1M (61 aa).

A beta region spans residues M1–C29. The a divalent metal cation site is built by C5, C7, C13, C15, C19, C21, C24, C26, C29, C33, C34, C36, C37, C41, C44, C48, C50, C57, C59, and C60. The tract at residues K30 to A61 is alpha.

Belongs to the metallothionein superfamily. Type 1 family. In terms of assembly, monomer.

Functionally, metallothioneins have a high content of cysteine residues that bind various heavy metals; these proteins are transcriptionally regulated by both heavy metals and glucocorticoids. In Homo sapiens (Human), this protein is Metallothionein-1M (MT1M).